The chain runs to 368 residues: Glutamate 5-kinase (368 aa).

An ATP-binding site is contributed by lysine 9. Substrate is bound by residues serine 49, aspartate 136, and asparagine 148. ATP is bound by residues 168-169 (TD) and 210-216 (TGGMMTK). Residues 275–353 (AGIITIDNGA…ADIENVLGYE (79 aa)) enclose the PUA domain.

This sequence belongs to the glutamate 5-kinase family.

The protein localises to the cytoplasm. It carries out the reaction L-glutamate + ATP = L-glutamyl 5-phosphate + ADP. Its pathway is amino-acid biosynthesis; L-proline biosynthesis; L-glutamate 5-semialdehyde from L-glutamate: step 1/2. In terms of biological role, catalyzes the transfer of a phosphate group to glutamate to form L-glutamate 5-phosphate. This chain is Glutamate 5-kinase, found in Haemophilus influenzae (strain PittGG).